A 778-amino-acid polypeptide reads, in one-letter code: Ent-sandaracopimaradiene synthase KSL3, chloroplastic (778 aa).

A chloroplast-targeting transit peptide spans Met-1–Val-35. Asp-527, Glu-531, Asn-670, Asp-671, and Asp-678 together coordinate Mg(2+). The DDXXD motif signature appears at Asp-527 to Glu-531.

This sequence belongs to the terpene synthase family. The cofactor is Mg(2+).

It localises to the plastid. The protein localises to the chloroplast. The enzyme catalyses ent-copalyl diphosphate = ent-sandaracopimara-8(14),15-diene + diphosphate. It carries out the reaction ent-copalyl diphosphate = ent-(12E)-labda-8(17),12,14-triene + diphosphate. It functions in the pathway secondary metabolite biosynthesis; terpenoid biosynthesis. Functionally, diterpene cyclase involved in the biosynthesis of labdane-related diterpenoids (LRDs) natural products. Catalyzes the cyclization of ent-CDP into ent-sandaracopimaradiene as a major, and ent-pimaradiene and ent-labdatriene as minor products. This Ricinus communis (Castor bean) protein is Ent-sandaracopimaradiene synthase KSL3, chloroplastic.